The following is a 253-amino-acid chain: Tetraspanin-3 (253 aa).

The Cytoplasmic portion of the chain corresponds to 1–11; the sequence is MGQCGITSSKT. Residues 12 to 32 traverse the membrane as a helical segment; the sequence is VLVFLNLIFWGAAGILCYVGA. Topologically, residues 33 to 50 are extracellular; it reads YVFITYDDYDHFFEDVYT. The chain crosses the membrane as a helical span at residues 51–71; it reads LIPAVVIIAVGALLFIIGLIG. At 72-85 the chain is on the cytoplasmic side; sequence CCATIRESRCGLAT. A helical transmembrane segment spans residues 86-106; the sequence is FVIILLLVFVTEVVVVVLGYV. Residues 107–212 lie on the Extracellular side of the membrane; it reads YRAKVENEVD…KKLQEIMMHV (106 aa). Asn-127, Asn-152, Asn-167, and Asn-183 each carry an N-linked (GlcNAc...) asparagine glycan. The helical transmembrane segment at 213-233 threads the bilayer; that stretch reads IWAALAFAAIQLLGMLCACIV. The Cytoplasmic segment spans residues 234–253; sequence LCRRSRDPAYELLITGGTYA.

The protein belongs to the tetraspanin (TM4SF) family. In terms of assembly, interacts with claudin-11/CLDN11 and integrins.

The protein localises to the membrane. In terms of biological role, regulates the proliferation and migration of oligodendrocytes, a process essential for normal myelination and repair. The polypeptide is Tetraspanin-3 (TSPAN3) (Homo sapiens (Human)).